A 126-amino-acid polypeptide reads, in one-letter code: Antimicrobial protein 1 (126 aa).

Positions 1-24 (MRSSLLLGLTVVLLLGVTVPPCMA) are cleaved as a signal peptide.

In terms of tissue distribution, strongly expressed in gills, hemocytes and reproductive tract, with weaker expression in muscle, heart and digestive tract. Not detected in eyes and hepatopancreas (at protein level).

It is found in the secreted. Functionally, has antibacterial activity against the Gram-positive bacteria E.coli (MIC&lt;50 ug/ml) and P.aeruginosa (MIC&lt;25 ug/ml), and the Gram-negative bacteria S.aureus (MIC&lt;100 ug/ml) and S.pyogenes (MIC&lt;50 ug/ml). The chain is Antimicrobial protein 1 from Scylla serrata (Mud crab).